Here is a 370-residue protein sequence, read N- to C-terminus: MQQDKVNLLGLNQKAIEDFFISIGEKKFHARQVFKWIHKKGVIDFDAMTDLGKNLRHKLKEKAQITIPKVVFSKASKDGTHKWLIDVGGSAVETVFIPEEGRGTLCVSSQVGCTLNCSFCSTGKQGFNRNLSAAEVIAQLWIAARTLSKTDGEHDFTVTNIVMMGMGEPLMNFENVVPAMDIMMDDLAYGLSRRKVTLSTSGVVPRIYDLLEQSGVSLAVSLHAPNDMLRNEIVPINKKYNIDELLEACKLYAQNGPHKHITFEYTLMEEVNDNLSDAEELVALLKSREVPAKINLIPFNPYPGTPYKKPSNNRIHRFKEFLQHNGFVTTVRKTRGDDIDAACGQLAGDVMDKTNRKQRYLKKLGDTNAN.

The active-site Proton acceptor is the E93. The 239-residue stretch at 99–337 folds into the Radical SAM core domain; that stretch reads EEGRGTLCVS…VTTVRKTRGD (239 aa). C106 and C343 form a disulfide bridge. The [4Fe-4S] cluster site is built by C113, C117, and C120. Residues 167-168, S199, 221-223, and N300 contribute to the S-adenosyl-L-methionine site; these read GE and SLH. The active-site S-methylcysteine intermediate is C343.

The protein belongs to the radical SAM superfamily. RlmN family. The cofactor is [4Fe-4S] cluster.

The protein resides in the cytoplasm. The enzyme catalyses adenosine(2503) in 23S rRNA + 2 reduced [2Fe-2S]-[ferredoxin] + 2 S-adenosyl-L-methionine = 2-methyladenosine(2503) in 23S rRNA + 5'-deoxyadenosine + L-methionine + 2 oxidized [2Fe-2S]-[ferredoxin] + S-adenosyl-L-homocysteine. The catalysed reaction is adenosine(37) in tRNA + 2 reduced [2Fe-2S]-[ferredoxin] + 2 S-adenosyl-L-methionine = 2-methyladenosine(37) in tRNA + 5'-deoxyadenosine + L-methionine + 2 oxidized [2Fe-2S]-[ferredoxin] + S-adenosyl-L-homocysteine. Functionally, specifically methylates position 2 of adenine 2503 in 23S rRNA and position 2 of adenine 37 in tRNAs. m2A2503 modification seems to play a crucial role in the proofreading step occurring at the peptidyl transferase center and thus would serve to optimize ribosomal fidelity. The polypeptide is Dual-specificity RNA methyltransferase RlmN (Francisella tularensis subsp. mediasiatica (strain FSC147)).